The sequence spans 119 residues: Large ribosomal subunit protein uL14 (119 aa).

This sequence belongs to the universal ribosomal protein uL14 family. In terms of assembly, part of the 50S ribosomal subunit. Forms a cluster with proteins L3 and L19. In the 70S ribosome, L14 and L19 interact and together make contacts with the 16S rRNA in bridges B5 and B8.

In terms of biological role, binds to 23S rRNA. Forms part of two intersubunit bridges in the 70S ribosome. This chain is Large ribosomal subunit protein uL14, found in Anaplasma marginale (strain St. Maries).